A 305-amino-acid polypeptide reads, in one-letter code: Glycine--tRNA ligase alpha subunit (305 aa).

It belongs to the class-II aminoacyl-tRNA synthetase family. As to quaternary structure, tetramer of two alpha and two beta subunits.

The protein resides in the cytoplasm. The enzyme catalyses tRNA(Gly) + glycine + ATP = glycyl-tRNA(Gly) + AMP + diphosphate. The protein is Glycine--tRNA ligase alpha subunit of Streptococcus pneumoniae (strain Hungary19A-6).